A 339-amino-acid chain; its full sequence is Anthranilate phosphoribosyltransferase (339 aa).

5-phospho-alpha-D-ribose 1-diphosphate contacts are provided by residues G79, 82–83, T87, 89–92, 107–115, and S119; these read GD, NIST, and KHGNRAVSS. Position 79 (G79) interacts with anthranilate. S91 is a Mg(2+) binding site. N110 is an anthranilate binding site. Position 165 (R165) interacts with anthranilate. Mg(2+) contacts are provided by D224 and E225.

The protein belongs to the anthranilate phosphoribosyltransferase family. Homodimer. Mg(2+) serves as cofactor.

It carries out the reaction N-(5-phospho-beta-D-ribosyl)anthranilate + diphosphate = 5-phospho-alpha-D-ribose 1-diphosphate + anthranilate. The protein operates within amino-acid biosynthesis; L-tryptophan biosynthesis; L-tryptophan from chorismate: step 2/5. Functionally, catalyzes the transfer of the phosphoribosyl group of 5-phosphorylribose-1-pyrophosphate (PRPP) to anthranilate to yield N-(5'-phosphoribosyl)-anthranilate (PRA). The chain is Anthranilate phosphoribosyltransferase from Geobacillus thermodenitrificans (strain NG80-2).